The following is a 169-amino-acid chain: 6,7-dimethyl-8-ribityllumazine synthase (169 aa).

5-amino-6-(D-ribitylamino)uracil contacts are provided by residues tyrosine 30, 61–63, and 90–92; these read ALE and CVI. A (2S)-2-hydroxy-3-oxobutyl phosphate-binding site is contributed by 95 to 96; sequence ET. Residue histidine 98 is the Proton donor of the active site. Position 123 (asparagine 123) interacts with 5-amino-6-(D-ribitylamino)uracil. Residue arginine 137 participates in (2S)-2-hydroxy-3-oxobutyl phosphate binding.

It belongs to the DMRL synthase family.

It catalyses the reaction (2S)-2-hydroxy-3-oxobutyl phosphate + 5-amino-6-(D-ribitylamino)uracil = 6,7-dimethyl-8-(1-D-ribityl)lumazine + phosphate + 2 H2O + H(+). Its pathway is cofactor biosynthesis; riboflavin biosynthesis; riboflavin from 2-hydroxy-3-oxobutyl phosphate and 5-amino-6-(D-ribitylamino)uracil: step 1/2. Catalyzes the formation of 6,7-dimethyl-8-ribityllumazine by condensation of 5-amino-6-(D-ribitylamino)uracil with 3,4-dihydroxy-2-butanone 4-phosphate. This is the penultimate step in the biosynthesis of riboflavin. The sequence is that of 6,7-dimethyl-8-ribityllumazine synthase from Methylorubrum populi (strain ATCC BAA-705 / NCIMB 13946 / BJ001) (Methylobacterium populi).